Reading from the N-terminus, the 454-residue chain is Ornithine aminotransferase (454 aa).

At lysine 280 the chain carries N6-(pyridoxal phosphate)lysine.

Belongs to the class-III pyridoxal-phosphate-dependent aminotransferase family. The cofactor is pyridoxal 5'-phosphate.

It localises to the cytoplasm. It catalyses the reaction a 2-oxocarboxylate + L-ornithine = L-glutamate 5-semialdehyde + an L-alpha-amino acid. Its pathway is amino-acid biosynthesis; L-proline biosynthesis; L-glutamate 5-semialdehyde from L-ornithine: step 1/1. The sequence is that of Ornithine aminotransferase (otaA) from Emericella nidulans (strain FGSC A4 / ATCC 38163 / CBS 112.46 / NRRL 194 / M139) (Aspergillus nidulans).